A 242-amino-acid polypeptide reads, in one-letter code: Probable septum site-determining protein MinC (242 aa).

It belongs to the MinC family. Interacts with MinD and FtsZ.

Its function is as follows. Cell division inhibitor that blocks the formation of polar Z ring septums. Rapidly oscillates between the poles of the cell to destabilize FtsZ filaments that have formed before they mature into polar Z rings. Prevents FtsZ polymerization. This is Probable septum site-determining protein MinC from Agrobacterium fabrum (strain C58 / ATCC 33970) (Agrobacterium tumefaciens (strain C58)).